We begin with the raw amino-acid sequence, 189 residues long: ATP-dependent protease subunit HslV (189 aa).

Residue Thr12 is part of the active site. Na(+)-binding residues include Ser172, Cys175, and Thr178.

Belongs to the peptidase T1B family. HslV subfamily. A double ring-shaped homohexamer of HslV is capped on each side by a ring-shaped HslU homohexamer. The assembly of the HslU/HslV complex is dependent on binding of ATP.

The protein localises to the cytoplasm. The enzyme catalyses ATP-dependent cleavage of peptide bonds with broad specificity.. Allosterically activated by HslU binding. In terms of biological role, protease subunit of a proteasome-like degradation complex believed to be a general protein degrading machinery. The chain is ATP-dependent protease subunit HslV from Ehrlichia chaffeensis (strain ATCC CRL-10679 / Arkansas).